The following is a 326-amino-acid chain: Peroxidase 46 (326 aa).

Residues 1–27 (MASSYRINCSTLLHLLMFLSSLLTSSA) form the signal peptide. Asn28 is a glycosylation site (N-linked (GlcNAc...) asparagine). 4 cysteine pairs are disulfide-bonded: Cys38–Cys114, Cys71–Cys76, Cys120–Cys322, and Cys199–Cys233. The active-site Proton acceptor is His69. Positions 70, 73, 75, 77, and 79 each coordinate Ca(2+). Residue Asn85 is glycosylated (N-linked (GlcNAc...) asparagine). Heme b is bound at residue His192. Thr193 lines the Ca(2+) pocket. Asp246, Thr249, and Asp254 together coordinate Ca(2+). Asn278 carries N-linked (GlcNAc...) asparagine glycosylation.

Belongs to the peroxidase family. Classical plant (class III) peroxidase subfamily. Requires heme b as cofactor. It depends on Ca(2+) as a cofactor.

It is found in the secreted. The catalysed reaction is 2 a phenolic donor + H2O2 = 2 a phenolic radical donor + 2 H2O. Its function is as follows. Removal of H(2)O(2), oxidation of toxic reductants, biosynthesis and degradation of lignin, suberization, auxin catabolism, response to environmental stresses such as wounding, pathogen attack and oxidative stress. These functions might be dependent on each isozyme/isoform in each plant tissue. The sequence is that of Peroxidase 46 (PER46) from Arabidopsis thaliana (Mouse-ear cress).